A 326-amino-acid chain; its full sequence is Beta-ketoacyl-[acyl-carrier-protein] synthase III (326 aa).

Catalysis depends on residues C112 and H251. Residues 252–256 are ACP-binding; that stretch reads QANSR. Residue N281 is part of the active site.

This sequence belongs to the thiolase-like superfamily. FabH family. Homodimer.

The protein resides in the cytoplasm. It catalyses the reaction malonyl-[ACP] + acetyl-CoA + H(+) = 3-oxobutanoyl-[ACP] + CO2 + CoA. It participates in lipid metabolism; fatty acid biosynthesis. Catalyzes the condensation reaction of fatty acid synthesis by the addition to an acyl acceptor of two carbons from malonyl-ACP. Catalyzes the first condensation reaction which initiates fatty acid synthesis and may therefore play a role in governing the total rate of fatty acid production. Possesses both acetoacetyl-ACP synthase and acetyl transacylase activities. Its substrate specificity determines the biosynthesis of branched-chain and/or straight-chain of fatty acids. The protein is Beta-ketoacyl-[acyl-carrier-protein] synthase III of Clostridium botulinum (strain Okra / Type B1).